The primary structure comprises 99 residues: uncharacterized protein (99 aa).

This is an uncharacterized protein from Salmonella typhimurium (strain LT2 / SGSC1412 / ATCC 700720).